Reading from the N-terminus, the 215-residue chain is Floral homeotic protein GLOBOSA (215 aa).

The region spanning 3–57 is the MADS-box domain; sequence RGKIEIKRIENSSNRQVTYSKRRNGIMKKAKEISVLCDAHVSVIIFASSGKMHEF. The K-box domain maps to 84–170; sequence HEHLDNEINR…QFKLRQMHLD (87 aa).

The protein localises to the nucleus. Its function is as follows. Transcription factor involved in the genetic control of flower development. Acts in conjunction with DEFICIENS (defA). The polypeptide is Floral homeotic protein GLOBOSA (GLO) (Antirrhinum majus (Garden snapdragon)).